The primary structure comprises 546 residues: Chaperonin GroEL (546 aa).

ATP-binding positions include 30 to 33 (TLGP), Lys51, 87 to 91 (DGTTT), Gly415, 479 to 481 (NAA), and Asp495. A disordered region spans residues 526 to 546 (KKDEPAMPAGGGMGGMGGMDF). The segment covering 534–546 (AGGGMGGMGGMDF) has biased composition (gly residues).

Belongs to the chaperonin (HSP60) family. Forms a cylinder of 14 subunits composed of two heptameric rings stacked back-to-back. Interacts with the co-chaperonin GroES.

It is found in the cytoplasm. It catalyses the reaction ATP + H2O + a folded polypeptide = ADP + phosphate + an unfolded polypeptide.. Its function is as follows. Together with its co-chaperonin GroES, plays an essential role in assisting protein folding. The GroEL-GroES system forms a nano-cage that allows encapsulation of the non-native substrate proteins and provides a physical environment optimized to promote and accelerate protein folding. The sequence is that of Chaperonin GroEL from Xanthomonas euvesicatoria pv. vesicatoria (strain 85-10) (Xanthomonas campestris pv. vesicatoria).